Here is a 407-residue protein sequence, read N- to C-terminus: Protein trichome birefringence-like 12 (407 aa).

A helical; Signal-anchor for type II membrane protein transmembrane segment spans residues Ser21–Leu41. A GDS motif motif is present at residues Gly130–Ser132. A DCXHWCLPGXXDXWN motif motif is present at residues Asp379–Val393.

It belongs to the PC-esterase family. TBL subfamily.

The protein localises to the membrane. Functionally, may act as a bridging protein that binds pectin and other cell wall polysaccharides. Probably involved in maintaining esterification of pectins. May be involved in the specific O-acetylation of cell wall polymers. This is Protein trichome birefringence-like 12 (TBL12) from Arabidopsis thaliana (Mouse-ear cress).